Reading from the N-terminus, the 126-residue chain is Probable glycine cleavage system H protein (126 aa).

In terms of domain architecture, Lipoyl-binding spans 24–106 (VVRVGITDFA…FGDGWLLEVE (83 aa)). At lysine 65 the chain carries N6-lipoyllysine.

Belongs to the GcvH family. As to quaternary structure, the glycine cleavage system is composed of four proteins: P, T, L and H. It depends on (R)-lipoate as a cofactor.

The glycine cleavage system catalyzes the degradation of glycine. The H protein shuttles the methylamine group of glycine from the P protein to the T protein. The sequence is that of Probable glycine cleavage system H protein from Natronomonas pharaonis (strain ATCC 35678 / DSM 2160 / CIP 103997 / JCM 8858 / NBRC 14720 / NCIMB 2260 / Gabara) (Halobacterium pharaonis).